A 399-amino-acid chain; its full sequence is MRIEPLIQGVVARSAHPYGCHASIKEQIEYVKKAPKIKSGPKRVLIIGASSGFGLAARIALTFGGAEADTIGVSFERGPSEKGVGSAGWYNNIFFKQEATHAGRTAINIVGDAFSDSVRNEVIEAIETYFEGEVDLVIYSLAAGVRPKPHSDTFWRSVIKPIGESVTGASILLENDQWVETTLEPATEEEAEATIKVMGGEDWESWIDTLINTESVAQGCKTIAFSYMGPEVTHPIYLDGTLGRAKIDLHQTSHALNLKLANFDGGAYATVCKALVTKASVFIPALSPYLLALYRVMKEKGTHERCIEQMQRLFTTKLYDQPKVPVDGERLIRIDDLELDPQTQAEVSHLLEQMNTENFKECGDYQGFKDEFMKLNGFNFDDVDYSQDISLETLASLKP.

NAD(+) contacts are provided by residues 48–53 (GASSGF), 75–76 (FE), 112–113 (DA), and 141–142 (LA). Tyrosine 227 contacts substrate. The active-site Proton donor is tyrosine 237. NAD(+) contacts are provided by residues lysine 246 and 275–277 (LVT).

It belongs to the TER reductase family. As to quaternary structure, monomer.

The catalysed reaction is a 2,3-saturated acyl-[ACP] + NAD(+) = a (2E)-enoyl-[ACP] + NADH + H(+). Its pathway is lipid metabolism; fatty acid biosynthesis. In terms of biological role, involved in the final reduction of the elongation cycle of fatty acid synthesis (FAS II). Catalyzes the reduction of a carbon-carbon double bond in an enoyl moiety that is covalently linked to an acyl carrier protein (ACP). The protein is Enoyl-[acyl-carrier-protein] reductase [NADH] 2 of Vibrio parahaemolyticus serotype O3:K6 (strain RIMD 2210633).